Consider the following 113-residue polypeptide: U11-theraphotoxin-Hhn1g (113 aa).

Positions 1 to 21 (MNTVRVTFLLVFVLAVSLGQA) are cleaved as a signal peptide. The propeptide occupies 22 to 74 (DKDENRMEMQEKTEQGKSYLDFAENLLLQKLEELEAKLLEEDSEESRNSRQKR). A disordered region spans residues 61 to 83 (EEDSEESRNSRQKRCIGEGVPCD). 3 disulfide bridges follow: C75/C90, C82/C95, and C89/C110.

The protein belongs to the neurotoxin 14 (magi-1) family. 01 (HNTX-16) subfamily. As to expression, expressed by the venom gland.

The protein resides in the secreted. Probable ion channel inhibitor. The chain is U11-theraphotoxin-Hhn1g from Cyriopagopus hainanus (Chinese bird spider).